We begin with the raw amino-acid sequence, 345 residues long: GTPase Obg (345 aa).

Positions 1–159 constitute an Obg domain; it reads MHFLDQAKIF…MWVWLRLKLL (159 aa). The disordered stretch occupies residues 121–142; that stretch reads GDGGRGNASYKTSTNRAPRQHG. The OBG-type G domain maps to 160 to 327; it reads ADCGLVGLPN…VLDKIIEILG (168 aa). GTP-binding positions include 166 to 173, 191 to 195, 212 to 215, 279 to 282, and 308 to 310; these read GLPNAGKS, FTTIR, DIPG, NKID, and SGA. 2 residues coordinate Mg(2+): serine 173 and threonine 193.

This sequence belongs to the TRAFAC class OBG-HflX-like GTPase superfamily. OBG GTPase family. As to quaternary structure, monomer. The cofactor is Mg(2+).

It is found in the cytoplasm. Its function is as follows. An essential GTPase which binds GTP, GDP and possibly (p)ppGpp with moderate affinity, with high nucleotide exchange rates and a fairly low GTP hydrolysis rate. Plays a role in control of the cell cycle, stress response, ribosome biogenesis and in those bacteria that undergo differentiation, in morphogenesis control. In Rhizorhabdus wittichii (strain DSM 6014 / CCUG 31198 / JCM 15750 / NBRC 105917 / EY 4224 / RW1) (Sphingomonas wittichii), this protein is GTPase Obg.